The sequence spans 374 residues: Relaxin-3 receptor 2 (374 aa).

Residues 1–43 (MPTLNTSASPPTFFWANASGGSVLSADDAPMPVKFLALRLMVA) are Extracellular-facing. N-linked (GlcNAc...) asparagine glycosylation is found at Asn5 and Asn17. Residues 44 to 64 (LAYGLVGAIGLLGNLAVLWVL) traverse the membrane as a helical segment. Residues 65–78 (SNCARRAPGPPSDT) lie on the Cytoplasmic side of the membrane. A helical transmembrane segment spans residues 79–99 (FVFNLALADLGLALTLPFWAA). At 100–116 (ESALDFHWPFGGALCKM) the chain is on the extracellular side. Cysteines 114 and 191 form a disulfide. A helical membrane pass occupies residues 117-137 (VLTATVLNVYASIFLITALSV). Over 138 to 154 (ARYWVVAMAAGPGTHLS) the chain is Cytoplasmic. The chain crosses the membrane as a helical span at residues 155–175 (LFWARIATLAVWAAAALVTVP). The Extracellular segment spans residues 176–209 (TAVFGVEGEVCGVRLCLLRFPSRYWLGAYQLQRV). Residues 210 to 230 (VLAFMVPLGVITTSYLLLLAF) form a helical membrane-spanning segment. The Cytoplasmic portion of the chain corresponds to 231 to 249 (LQRRQRRRQDSRVVARSVR). The chain crosses the membrane as a helical span at residues 250–270 (ILVASFFLCWFPNHVVTLWGV). Over 271 to 281 (LVKFDLVPWNS) the chain is Extracellular. The helical transmembrane segment at 282–302 (TFYTIQTYVFPVTTCLAHSNS) threads the bilayer. At 303–374 (CLNPVLYCLL…LTNLDRGTPG (72 aa)) the chain is on the cytoplasmic side.

It belongs to the G-protein coupled receptor 1 family. As to expression, expressed in a broader range of tissues including brain, kidney, testis, thymus, placenta, prostate, salivary gland, thyroid and colon.

The protein resides in the cell membrane. Its function is as follows. High affinity receptor for INSL5. Also acts as a receptor for RLN3/relaxin-3, as well as bradykinin and kallidin. Binding of the ligand inhibit cAMP accumulation. The sequence is that of Relaxin-3 receptor 2 (RXFP4) from Homo sapiens (Human).